An 855-amino-acid polypeptide reads, in one-letter code: Envelope glycoprotein gp150 (855 aa).

Residues 1 to 784 (MAEGFAANRQ…WIGNIPQYLK (784 aa)) are Extracellular-facing. Residues N220, N258, N269, N274, N298, N336, N418, N422, N448, N469, N481, N499, N518, N531, N548, and N551 are each glycosylated (N-linked (GlcNAc...) asparagine; by host). The interval 615-635 (VMLALATVLSMAGAGTGATAI) is fusion peptide. Residues 642 to 692 (HQVLATHQETIEKVTEALKINNLRLVTLEHQVLVIGLKVEAMEKFLYTAFA) are a coiled coil. An immunosuppression region spans residues 661–679 (INNLRLVTLEHQVLVIGLK). N716, N720, N728, and N736 each carry an N-linked (GlcNAc...) asparagine; by host glycan. The stretch at 735 to 771 (YNQTKELQQKFYEIIMNIEQNNVQVKKGLQQLQEWED) forms a coiled coil. The chain crosses the membrane as a helical span at residues 785-805 (GLLGGILGIGIGVLLLILCLP). The Cytoplasmic portion of the chain corresponds to 806 to 855 (TLVDCIRNCISKVLGYTVIAMPEIGDEEETVQMELRKNGRQCGMSEKEEE).

In terms of assembly, the mature envelope protein (Env) consists of a trimer of SU-TM heterodimers attached by noncovalent interactions or by a labile interchain disulfide bond. In terms of processing, specific enzymatic cleavages in vivo yield mature proteins. Envelope glycoproteins are synthesized as an inactive precursor that is N-glycosylated and processed likely by host cell furin or by a furin-like protease in the Golgi to yield the mature SU and TM proteins. The cleavage site between SU and TM requires the minimal sequence [KR]-X-[KR]-R.

It is found in the virion membrane. Its subcellular location is the host cell membrane. Functionally, the surface protein (SU) attaches the virus to the host cell by binding to its receptor. This interaction triggers the refolding of the transmembrane protein (TM) and is thought to activate its fusogenic potential by unmasking its fusion peptide. Fusion occurs at the host cell plasma membrane. Its function is as follows. The transmembrane protein (TM) acts as a class I viral fusion protein. Under the current model, the protein has at least 3 conformational states: pre-fusion native state, pre-hairpin intermediate state, and post-fusion hairpin state. During viral and target cell membrane fusion, the coiled coil regions (heptad repeats) assume a trimer-of-hairpins structure, positioning the fusion peptide in close proximity to the C-terminal region of the ectodomain. The formation of this structure appears to drive apposition and subsequent fusion of viral and target cell membranes. Membranes fusion leads to delivery of the nucleocapsid into the cytoplasm. The protein is Envelope glycoprotein gp150 (env) of Felidae (cat family).